A 151-amino-acid polypeptide reads, in one-letter code: FIS1-related protein fis-2 (151 aa).

A helical membrane pass occupies residues Leu-126–Phe-146.

It belongs to the FIS1 family.

It localises to the mitochondrion outer membrane. It is found in the peroxisome membrane. Its subcellular location is the mitochondrion. In terms of biological role, involved in the fragmentation of the mitochondrial network. Involved in perinuclear clustering of the mitochondrial network. May act, redundantly with fis-1, downstream of mitochondrial fission, before the fission products participate in mitochondrial homeostasis, mitophagy, or apoptosis. Plays a role in apoptosis by promoting mitochondrial elimination and cell-death execution, acting downstream of caspase ced-3, and perhaps independently of dynamin GTPase drp-1, caspase ced-9 and apoptosis-inducing factor AIFM/wah-1. The protein is FIS1-related protein fis-2 of Caenorhabditis elegans.